Here is a 352-residue protein sequence, read N- to C-terminus: Pyruvate dehydrogenase E1 component subunit beta, mitochondrial (352 aa).

A mitochondrion-targeting transit peptide spans 1–21 (MALRKCGNLFVARLAGTSTRA). A thiamine diphosphate-binding site is contributed by Glu81. 5 residues coordinate K(+): Ile134, Ala182, Ile183, Asp185, and Asn187.

As to quaternary structure, tetramer of 2 alpha and 2 beta subunits. It depends on thiamine diphosphate as a cofactor.

Its subcellular location is the mitochondrion matrix. It catalyses the reaction N(6)-[(R)-lipoyl]-L-lysyl-[protein] + pyruvate + H(+) = N(6)-[(R)-S(8)-acetyldihydrolipoyl]-L-lysyl-[protein] + CO2. Functionally, the pyruvate dehydrogenase complex catalyzes the overall conversion of pyruvate to acetyl-CoA and CO(2). It contains multiple copies of three enzymatic components: pyruvate dehydrogenase (E1), dihydrolipoamide acetyltransferase (E2) and lipoamide dehydrogenase (E3). The protein is Pyruvate dehydrogenase E1 component subunit beta, mitochondrial (pdhb-1) of Caenorhabditis elegans.